Consider the following 651-residue polypeptide: DNA endonuclease RBBP8 (651 aa).

Coiled-coil stretches lie at residues 35–84 (LQEL…EDRL) and 117–138 (ISEL…SLEL). Disordered regions lie at residues 138–199 (LERL…PESR), 363–433 (NGRL…EHQA), and 487–539 (YESC…SDKS). The segment covering 363–379 (NGRLQSKNQETSEIETT) has biased composition (polar residues). Basic and acidic residues predominate over residues 380-391 (QDSKKKCLDGHT). Positions 503–515 (VYEEEREEDDPEE) are enriched in acidic residues. Residues 525–539 (RPADRKPLVSDSDKS) show a composition bias toward basic and acidic residues. Phosphothreonine is present on residues threonine 599 and threonine 611.

Belongs to the COM1/SAE2/CtIP family. In terms of assembly, homotetramer; formed by antiparallel association of helical extensions protruding from the N-termini of two parallel coiled-coil dimers. Interacts with the MRN complex; the interaction links DNA sensing to resection. Interacts with samhd1. Post-translationally, phosphorylation at Thr-599 and Thr-611 promote interaction with nbn and recruitment to double-strand breaks (DSBs).

The protein resides in the nucleus. It localises to the chromosome. Endonuclease that cooperates with the MRE11-RAD50-NBN (MRN) complex in DNA-end resection, the first step of double-strand break (DSB) repair through the homologous recombination (HR) pathway. Functions downstream of the MRN complex and ATM, promotes ATR activation and its recruitment to DSBs in the S/G2 phase facilitating the generation of ssDNA. Specifically promotes the endonuclease activity of the MRN complex to clear DNA ends containing protein adducts: recruited to DSBs by nbn following phosphorylation, and promotes the endonuclease of mre11 to clear protein-DNA adducts and generate clean double-strand break ends. The chain is DNA endonuclease RBBP8 (rbbp8) from Danio rerio (Zebrafish).